A 165-amino-acid polypeptide reads, in one-letter code: Lipoprotein signal peptidase (165 aa).

Transmembrane regions (helical) follow at residues proline 68–glycine 88 and glycine 100–isoleucine 120. Residues aspartate 121 and aspartate 137 contribute to the active site. The helical transmembrane segment at phenylalanine 130–alanine 150 threads the bilayer.

This sequence belongs to the peptidase A8 family.

It localises to the cell inner membrane. The catalysed reaction is Release of signal peptides from bacterial membrane prolipoproteins. Hydrolyzes -Xaa-Yaa-Zaa-|-(S,diacylglyceryl)Cys-, in which Xaa is hydrophobic (preferably Leu), and Yaa (Ala or Ser) and Zaa (Gly or Ala) have small, neutral side chains.. It functions in the pathway protein modification; lipoprotein biosynthesis (signal peptide cleavage). In terms of biological role, this protein specifically catalyzes the removal of signal peptides from prolipoproteins. The protein is Lipoprotein signal peptidase of Acaryochloris marina (strain MBIC 11017).